The sequence spans 263 residues: 4-hydroxy-2-oxo-heptane-1,7-dioate aldolase (263 aa).

His45 acts as the Proton acceptor in catalysis. Position 147 (Gln147) interacts with substrate. An a divalent metal cation-binding site is contributed by Glu149. The substrate site is built by Ala174 and Asp175. Asp175 lines the a divalent metal cation pocket.

The protein belongs to the HpcH/HpaI aldolase family. As to quaternary structure, homohexamer; trimer of dimers. A divalent metal cation is required as a cofactor.

It carries out the reaction 4-hydroxy-2-oxoheptanedioate = succinate semialdehyde + pyruvate. Its pathway is aromatic compound metabolism; 4-hydroxyphenylacetate degradation; pyruvate and succinate semialdehyde from 4-hydroxyphenylacetate: step 7/7. Functionally, catalyzes the reversible retro-aldol cleavage of 4-hydroxy-2-ketoheptane-1,7-dioate (HKHD) to pyruvate and succinic semialdehyde. The sequence is that of 4-hydroxy-2-oxo-heptane-1,7-dioate aldolase from Salmonella newport (strain SL254).